The chain runs to 434 residues: MAMQKIFAREILDSRGNPTVEVDLHTAKGRFRAAVPSGASTGIYEALELRDGDKSRYLGKGVLKAVEHINKTLGPALLEKKLSVVDQEKVDKFMIELDGTENKSKFGANAILGVSLAVCKAGAAEKGVPLYRHIADLAGNPDLVLPVPAFNVINGGSHAGNKLAMQEFMILPVGASSFREAMRIGAEVYHHLKGVIKGKYGKDATNVGDEGGFAPNILENNEALELLKTAIQAAGYPDKVVIGMDVAASEFYRNGKYDLDFKSPDDPSRHITGEKLGELYKSFIKNYPVVSIEDPFDQDDWKTWTSFLSGVNIQIVGDDLTVTNLKRIAQAVEKKACNCLLLKVNQIGSVTESIQACKLAQSNGWGVMVSHRSGETEDTFIADLVVGLCTGQIKTGAPCRSERLAKYNQLMRIEEALGDKAVFAGRKFRNPKAK.

The residue at position 2 (Ala-2) is an N-acetylalanine. Position 72 is a phosphothreonine (Thr-72). Ser-83 and Ser-157 each carry phosphoserine. His-158 and Glu-167 together coordinate substrate. Phosphoserine is present on Ser-176. Thr-205 is modified (phosphothreonine). The Proton donor role is filled by Glu-210. Thr-229 carries the post-translational modification Phosphothreonine. A Phosphotyrosine modification is found at Tyr-236. Asp-245 is a binding site for Mg(2+). The residue at position 263 (Ser-263) is a Phosphoserine. Residues Glu-293 and Asp-318 each contribute to the substrate site. Residues Glu-293 and Asp-318 each contribute to the Mg(2+) site. The Proton acceptor role is filled by Lys-343. Substrate is bound by residues Ser-370–Ser-373 and Lys-394.

The protein belongs to the enolase family. As to quaternary structure, mammalian enolase is composed of 3 isozyme subunits, alpha, beta and gamma, which can form homodimers or heterodimers which are cell-type and development-specific. Interacts with PNKD. Mg(2+) is required as a cofactor.

The protein resides in the cytoplasm. The catalysed reaction is (2R)-2-phosphoglycerate = phosphoenolpyruvate + H2O. It participates in carbohydrate degradation; glycolysis; pyruvate from D-glyceraldehyde 3-phosphate: step 4/5. Its function is as follows. Glycolytic enzyme that catalyzes the conversion of 2-phosphoglycerate to phosphoenolpyruvate. Appears to have a function in striated muscle development and regeneration. The sequence is that of Beta-enolase (ENO3) from Sus scrofa (Pig).